Here is a 443-residue protein sequence, read N- to C-terminus: Xaa-Pro dipeptidase (443 aa).

The Mn(2+) site is built by Asp246, Asp257, His339, Glu384, and Glu423.

The protein belongs to the peptidase M24B family. Bacterial-type prolidase subfamily. The cofactor is Mn(2+).

The catalysed reaction is Xaa-L-Pro dipeptide + H2O = an L-alpha-amino acid + L-proline. Its function is as follows. Splits dipeptides with a prolyl residue in the C-terminal position. The chain is Xaa-Pro dipeptidase from Shigella boydii serotype 18 (strain CDC 3083-94 / BS512).